A 403-amino-acid chain; its full sequence is Succinoglycan biosynthesis protein ExoL (403 aa).

It is found in the cytoplasm. It participates in glycan metabolism; exopolysaccharide biosynthesis. Its function is as follows. Essential for succinoglycan (EPS I) synthesis and nodule infection. Glycosyltransferase needed for the addition of the third sugar (glucose), catalyzes the formation of a beta-1,4 linkage between the second and third sugars. This chain is Succinoglycan biosynthesis protein ExoL (exoL), found in Rhizobium meliloti (strain 1021) (Ensifer meliloti).